Here is a 255-residue protein sequence, read N- to C-terminus: 5'-nucleotidase SurE (255 aa).

A divalent metal cation-binding residues include Asp8, Asp9, Ser39, and Asn91.

This sequence belongs to the SurE nucleotidase family. A divalent metal cation serves as cofactor.

It localises to the cytoplasm. The enzyme catalyses a ribonucleoside 5'-phosphate + H2O = a ribonucleoside + phosphate. Functionally, nucleotidase that shows phosphatase activity on nucleoside 5'-monophosphates. This Acinetobacter baylyi (strain ATCC 33305 / BD413 / ADP1) protein is 5'-nucleotidase SurE.